Here is a 282-residue protein sequence, read N- to C-terminus: Trihydroxynaphthalene reductase PfmaI (282 aa).

Residues I41, N114, and R147 each coordinate NADP(+). Active-site proton donor residues include S164 and Y178. NADP(+)-binding residues include Y178, K182, I211, and T213. K182 acts as the Lowers pKa of active site Tyr in catalysis.

The protein belongs to the short-chain dehydrogenases/reductases (SDR) family.

It functions in the pathway pigment biosynthesis; melanin biosynthesis. Functionally, trihydroxynaphthalene reductase involved the biosynthesis of dihydroxynaphthalene (DHN)-melanin, a bluish-green pigment forming a dark layer in the conidial wall that protects the conidia from UV radiations. The first step of the pathway is the production of the pentaketide 1,3,6,8-tetrahydroxynaphthalene (1,3,6,8-THN or T4HN) by the polyketide synthase PfmaE though condensation of acetyl-CoA with malonyl-CoA. T4HN is not stable and easily oxidizes into the stable form flaviolin. T4HN is also substrate of the hydroxynaphthalene reductase PfmaG to yield scytalone. The scytalone dehydratase PfmaJ then reduces scytalone to 1,3,8-THN. 1,3,8-THN is then substrate of the hydroxynaphthalene reductase PfmaI to yield vermelone. Vermelone is further converted by the multicopper oxidase PfmaD to 1,8-DHN. Finally the laccase PFICI_06862 transforms 1,8-DHN to DHN-melanin. The roles of the 5-oxoprolinase PfmaA and the proline iminopeptidase PfmaB within the cluster have not been elucidated yet. The chain is Trihydroxynaphthalene reductase PfmaI from Pestalotiopsis fici (strain W106-1 / CGMCC3.15140).